Here is a 176-residue protein sequence, read N- to C-terminus: Adenine phosphoribosyltransferase (176 aa).

Belongs to the purine/pyrimidine phosphoribosyltransferase family. Homodimer.

It is found in the cytoplasm. The catalysed reaction is AMP + diphosphate = 5-phospho-alpha-D-ribose 1-diphosphate + adenine. Its pathway is purine metabolism; AMP biosynthesis via salvage pathway; AMP from adenine: step 1/1. In terms of biological role, catalyzes a salvage reaction resulting in the formation of AMP, that is energically less costly than de novo synthesis. This chain is Adenine phosphoribosyltransferase, found in Borreliella afzelii (strain PKo) (Borrelia afzelii).